A 295-amino-acid polypeptide reads, in one-letter code: Probable palmitoyltransferase ZDHHC24 (295 aa).

The Cytoplasmic segment spans residues 1-20; the sequence is MTSFMSRVWCKVESTGRQLP. Residues 21 to 41 traverse the membrane as a helical segment; it reads IVLNAVLVFSITAEVSYLVLV. At 42–60 the chain is on the extracellular side; that stretch reads EAPFEPEQKKTDWSTIWTG. Residues 61–81 traverse the membrane as a helical segment; the sequence is LHLFAQYFMLGNITWNASLFV. At 82 to 151 the chain is on the cytoplasmic side; the sequence is KTNPSIRGVF…HNYRYFLTCL (70 aa). The region spanning 102-152 is the DHHC domain; the sequence is RYCYNCETHTPPRCSHCYDCNVCVLRRDHHCVFFGQCVGFHNYRYFLTCLL. Cysteine 132 serves as the catalytic S-palmitoyl cysteine intermediate. Residues 152-172 traverse the membrane as a helical segment; sequence LFMWAGLLYAVVMNAEVFIFI. Over 173 to 176 the chain is Extracellular; sequence LKEG. The helical transmembrane segment at 177–197 threads the bilayer; the sequence is VTFHSVMLLLVPWIMLVSGQV. Residues 198 to 203 lie on the Cytoplasmic side of the membrane; it reads TTRAFA. The helical transmembrane segment at 204 to 224 threads the bilayer; the sequence is FAFIADTCVVGFLLVAAFLFF. Topologically, residues 225–295 are extracellular; it reads HVALMLRGQT…SLEPKKQAVH (71 aa).

The protein belongs to the DHHC palmitoyltransferase family.

It localises to the membrane. The catalysed reaction is L-cysteinyl-[protein] + hexadecanoyl-CoA = S-hexadecanoyl-L-cysteinyl-[protein] + CoA. Probable palmitoyltransferase that could catalyze the addition of palmitate onto various protein substrates. This is Probable palmitoyltransferase ZDHHC24 from Danio rerio (Zebrafish).